The chain runs to 536 residues: Proto-oncogene tyrosine-protein kinase Src (536 aa).

Residues 1 to 53 (MGSNKSKPKDASQRRRSLEPAENVHGAGGGAFPASQTPSKPASADGHRGPSAA) form a disordered region. Gly2 is lipidated: N-myristoyl glycine. Positions 7-19 (KPKDASQRRRSLE) are enriched in basic and acidic residues. Ser17 carries the phosphoserine modification. Phosphoserine; by CDK5 is present on Ser75. The 62-residue stretch at 84–145 (GGVTTFVALY…PSNYVAPSDS (62 aa)) folds into the SH3 domain. The region spanning 151–248 (WYFGKITRRE…GLCHRLTTVC (98 aa)) is the SH2 domain. The residue at position 187 (Tyr187) is a Phosphotyrosine. Positions 270-523 (LRLEVKLGQG…YLQAFLEDYF (254 aa)) constitute a Protein kinase domain. Residues 276–284 (LGQGCFGEV) and Lys298 contribute to the ATP site. Residue Asp389 is the Proton acceptor of the active site. The residue at position 419 (Tyr419) is a Phosphotyrosine; by autocatalysis. Tyr419 carries the phosphotyrosine; by FAK2 modification. At Tyr530 the chain carries Phosphotyrosine; by CSK.

This sequence belongs to the protein kinase superfamily. Tyr protein kinase family. SRC subfamily. As to quaternary structure, part of a complex comprised of PTPRA, BCAR1, BCAR3 (via SH2 domain) and SRC; the formation of the complex is dependent on integrin mediated-tyrosine phosphorylation of PTPRA. Interacts with DDEF1/ASAP1; via the SH3 domain. Interacts with CCPG1. Identified in a complex containing FGFR4, NCAM1, CDH2, PLCG1, FRS2, SRC, SHC1, GAP43 and CTTN. Interacts with ERBB2, STAT1 and PNN. Interacts with DDR1, DDR2 and DAB2. Interacts with CDCP1, TGFB1I1 and TOM1L2. Interacts with the cytoplasmic domain of MUC1, phosphorylates it and increases binding of MUC1 with beta-catenin. Interacts with RALGPS1; via the SH3 domain. Interacts with CAV2 (tyrosine phosphorylated form). Interacts (via the SH3 domain and the protein kinase domain) with ARRB1; the interaction is independent of the phosphorylation state of SRC C-terminus. Interacts with ARRB1 and ARRB2. Interacts with SRCIN1. Interacts with NDFIP2 and more weakly with NDFIP1. Interacts with PIK3CA and/or PIK3C2B, PTK2/FAK1 and ESR1 (dimethylated on arginine). Interacts with FASLG. Interacts (via SH2 domain) with the 'Tyr-402' phosphorylated form of PTK2B/PYK2. Interacts (via SH2 domain) with FLT3 (tyrosine phosphorylated). Interacts with PDGFRA (tyrosine phosphorylated). Interacts with CSF1R. Interacts (via SH2 and SH3 domain) with TNK2. Interacts (via protein kinase domain) with the tyrosine phosphorylated form of RUNX3 (via runt domain). Interacts with TRAF3 (via RING-type zinc finger domain). Interacts with RIGI, MAVS and TBK1. Interacts (via SH2 domain) with RACK1; the interaction is enhanced by tyrosine phosphorylation of RACK1 and inhibits SRC activity. Interacts with EPHB1; activates the MAPK/ERK cascade to regulate cell migration. Interacts with FCAMR. Interacts (via SH2 domain) with the 'Tyr-9' phosphorylated form of PDPK1. Interacts with AMOTL2; this interaction regulates the translocation of phosphorylated SRC to peripheral cell-matrix adhesion sites. Interacts with TRAP1. Interacts with CBLC; the interaction is enhanced when SRC is phosphorylated at Tyr-419. Interacts with ARHGEF5. Interacts (via cytoplasmic domain) with CEACAM1 (via SH2 domain); this interaction is regulated by trans-homophilic cell adhesion. Interacts with MPP2. Interacts with PRR7. Interacts (via kinase domain and to a lesser extent the SH2 domain) directly with PDLIM4; this interaction results in PTPN13-mediated dephosphorylation of this protein leading to its inactivation. Interacts with P85 (PIK3R1 or PIK3R2). Interacts with HNRNPA2B1. Interacts with IL6ST/gp130. Interacts (via SH3 domain) with PELP1 in the presence of 17-beta-estradiol. Interacts with AMBRA1. In terms of assembly, (Microbial infection) Interacts with HEV ORF3 protein; via the SH3 domain. (Microbial infection) Interacts (via SH2 domain) with HCV non-structural protein 5A (via N-terminus). Myristoylated at Gly-2, and this is essential for targeting to membranes. In terms of processing, dephosphorylated at Tyr-530 by PTPRJ. Phosphorylated on Tyr-530 by c-Src kinase (CSK). The phosphorylated form is termed pp60c-src. Dephosphorylated by PTPRJ at Tyr-419. Normally maintained in an inactive conformation with the SH2 domain engaged with Tyr-530, the SH3 domain engaged with the SH2-kinase linker, and Tyr-419 dephosphorylated. Dephosphorylation of Tyr-530 as a result of protein tyrosine phosphatase (PTP) action disrupts the intramolecular interaction between the SH2 domain and Tyr-530, Tyr-419 can then become autophosphorylated, resulting in SRC activation. Phosphorylation of Tyr-530 by CSK allows this interaction to reform, resulting in SRC inactivation. CDK5-mediated phosphorylation at Ser-75 targets SRC to ubiquitin-dependent degradation and thus leads to cytoskeletal reorganization. Phosphorylated by PTK2/FAK1; this enhances kinase activity. Phosphorylated by PTK2B/PYK2; this enhances kinase activity. Upon activation of IL6ST by IL6, Tyr-419 is phosphorylated and Tyr-530 dephosphorylated. Post-translationally, displays reduced levels of autophosphorylation at Tyr-419 compared to isoforms 2 and 3. Displays enhanced levels of autophosphorylation at Tyr-419 compared to isoform 1. In terms of processing, displays enhanced levels of autophosphorylation at Tyr-419 compared to isoform 1. Shows reduced phosphorylation at Tyr-527 compared to isoforms 1 and 2. Post-translationally, S-nitrosylation is important for activation of its kinase activity. Ubiquitinated in response to CDK5-mediated phosphorylation. Ubiquitination mediated by CBLC requires SRC autophosphorylation at Tyr-419 and may lead to lysosomal degradation. Expressed ubiquitously. Expressed in the skin (at protein level). Platelets, neurons and osteoclasts express 5-fold to 200-fold higher levels than most other tissues. As to expression, expressed in spleen and liver. In terms of tissue distribution, expressed in brain.

The protein resides in the cell membrane. It localises to the mitochondrion inner membrane. Its subcellular location is the nucleus. The protein localises to the cytoplasm. It is found in the cytoskeleton. The protein resides in the perinuclear region. It localises to the cell junction. Its subcellular location is the focal adhesion. It carries out the reaction L-tyrosyl-[protein] + ATP = O-phospho-L-tyrosyl-[protein] + ADP + H(+). Phosphorylation by CSK at Tyr-530 inhibits kinase activity. Inhibitory phosphorylation at Tyr-530 is enhanced by heme. Further phosphorylation by CDK1 partially reactivates CSK-inactivated SRC and facilitates complete reactivation by protein tyrosine phosphatase PTPRC. Integrin engagement stimulates kinase activity. Phosphorylation by PTK2/FAK1 enhances kinase activity. Butein and pseudosubstrate-based peptide inhibitors like CIYKYYF act as inhibitors. Phosphorylation at Tyr-419 increases kinase activity. Non-receptor protein tyrosine kinase which is activated following engagement of many different classes of cellular receptors including immune response receptors, integrins and other adhesion receptors, receptor protein tyrosine kinases, G protein-coupled receptors as well as cytokine receptors. Participates in signaling pathways that control a diverse spectrum of biological activities including gene transcription, immune response, cell adhesion, cell cycle progression, apoptosis, migration, and transformation. Due to functional redundancy between members of the SRC kinase family, identification of the specific role of each SRC kinase is very difficult. SRC appears to be one of the primary kinases activated following engagement of receptors and plays a role in the activation of other protein tyrosine kinase (PTK) families. Receptor clustering or dimerization leads to recruitment of SRC to the receptor complexes where it phosphorylates the tyrosine residues within the receptor cytoplasmic domains. Plays an important role in the regulation of cytoskeletal organization through phosphorylation of specific substrates such as AFAP1. Phosphorylation of AFAP1 allows the SRC SH2 domain to bind AFAP1 and to localize to actin filaments. Cytoskeletal reorganization is also controlled through the phosphorylation of cortactin (CTTN). When cells adhere via focal adhesions to the extracellular matrix, signals are transmitted by integrins into the cell resulting in tyrosine phosphorylation of a number of focal adhesion proteins, including PTK2/FAK1 and paxillin (PXN). In addition to phosphorylating focal adhesion proteins, SRC is also active at the sites of cell-cell contact adherens junctions and phosphorylates substrates such as beta-catenin (CTNNB1), delta-catenin (CTNND1), and plakoglobin (JUP). Another type of cell-cell junction, the gap junction, is also a target for SRC, which phosphorylates connexin-43 (GJA1). SRC is implicated in regulation of pre-mRNA-processing and phosphorylates RNA-binding proteins such as KHDRBS1. Phosphorylates PKP3 at 'Tyr-195' in response to reactive oxygen species, which may cause the release of PKP3 from desmosome cell junctions into the cytoplasm. Also plays a role in PDGF-mediated tyrosine phosphorylation of both STAT1 and STAT3, leading to increased DNA binding activity of these transcription factors. Involved in the RAS pathway through phosphorylation of RASA1 and RASGRF1. Plays a role in EGF-mediated calcium-activated chloride channel activation. Required for epidermal growth factor receptor (EGFR) internalization through phosphorylation of clathrin heavy chain (CLTC and CLTCL1) at 'Tyr-1477'. Involved in beta-arrestin (ARRB1 and ARRB2) desensitization through phosphorylation and activation of GRK2, leading to beta-arrestin phosphorylation and internalization. Has a critical role in the stimulation of the CDK20/MAPK3 mitogen-activated protein kinase cascade by epidermal growth factor. Might be involved not only in mediating the transduction of mitogenic signals at the level of the plasma membrane but also in controlling progression through the cell cycle via interaction with regulatory proteins in the nucleus. Plays an important role in osteoclastic bone resorption in conjunction with PTK2B/PYK2. Both the formation of a SRC-PTK2B/PYK2 complex and SRC kinase activity are necessary for this function. Recruited to activated integrins by PTK2B/PYK2, thereby phosphorylating CBL, which in turn induces the activation and recruitment of phosphatidylinositol 3-kinase to the cell membrane in a signaling pathway that is critical for osteoclast function. Promotes energy production in osteoclasts by activating mitochondrial cytochrome C oxidase. Phosphorylates DDR2 on tyrosine residues, thereby promoting its subsequent autophosphorylation. Phosphorylates RUNX3 and COX2 on tyrosine residues, TNK2 on 'Tyr-284' and CBL on 'Tyr-731'. Enhances RIGI-elicited antiviral signaling. Phosphorylates PDPK1 at 'Tyr-9', 'Tyr-373' and 'Tyr-376'. Phosphorylates BCAR1 at 'Tyr-128'. Phosphorylates CBLC at multiple tyrosine residues, phosphorylation at 'Tyr-341' activates CBLC E3 activity. Phosphorylates synaptic vesicle protein synaptophysin (SYP). Involved in anchorage-independent cell growth. Required for podosome formation. Mediates IL6 signaling by activating YAP1-NOTCH pathway to induce inflammation-induced epithelial regeneration. Phosphorylates OTUB1, promoting deubiquitination of RPTOR. Phosphorylates caspase CASP8 at 'Tyr-380' which negatively regulates CASP8 processing and activation, down-regulating CASP8 proapoptotic function. Its function is as follows. Non-receptor protein tyrosine kinase which phosphorylates synaptophysin with high affinity. Functionally, non-receptor protein tyrosine kinase which shows higher basal kinase activity than isoform 1, possibly due to weakened intramolecular interactions which enhance autophosphorylation of Tyr-419 and subsequent activation. The SH3 domain shows reduced affinity with the linker sequence between the SH2 and kinase domains which may account for the increased basal activity. Displays altered substrate specificity compared to isoform 1, showing weak affinity for synaptophysin and for peptide substrates containing class I or class II SH3 domain-binding motifs. Plays a role in L1CAM-mediated neurite elongation, possibly by acting downstream of L1CAM to drive cytoskeletal rearrangements involved in neurite outgrowth. In terms of biological role, non-receptor protein tyrosine kinase which shows higher basal kinase activity than isoform 1, possibly due to weakened intramolecular interactions which enhance autophosphorylation of Tyr-419 and subsequent activation. The SH3 domain shows reduced affinity with the linker sequence between the SH2 and kinase domains which may account for the increased basal activity. Displays altered substrate specificity compared to isoform 1, showing weak affinity for synaptophysin and for peptide substrates containing class I or class II SH3 domain-binding motifs. Plays a role in neurite elongation. In Homo sapiens (Human), this protein is Proto-oncogene tyrosine-protein kinase Src.